Here is an 85-residue protein sequence, read N- to C-terminus: Large ribosomal subunit protein eL43 (85 aa).

Cys32, Cys35, Cys50, and Cys53 together coordinate Zn(2+). Residues 32–53 (CTFCGKTKMKRRAVGIWHCGSC) form a C4-type zinc finger.

It belongs to the eukaryotic ribosomal protein eL43 family. Component of the large ribosomal subunit.

It localises to the cytoplasm. In terms of biological role, component of the large ribosomal subunit. The ribosome is a large ribonucleoprotein complex responsible for the synthesis of proteins in the cell. The chain is Large ribosomal subunit protein eL43 (rpl37a) from Myxine glutinosa (Atlantic hagfish).